The sequence spans 252 residues: MFYDFVPQSRFLLGTAGYPSPQILQQAVMASESEIITVSLRREGSQGGAFRELLTQLNKRILPNTAGCHTVKEAVTTAHMARELFNTRWIKLEVIGHADTLQPDPFALVEAARILCADGFQVFPYTTEDLILGEKLLEAGCELLMPWGAPIGSGQGLRNIEGLRSMRLWFKDIPLIIDAGIGAPSQAAQAMEMGFDGILLNTAVARAQDPLRMAQAFAAAVRAGYDAHGAGLIERRDMATASTPIFGMAQFS.

Residue K91 is the Schiff-base intermediate with DXP of the active site. 1-deoxy-D-xylulose 5-phosphate is bound by residues G152, A179–G180, and N201–T202.

Belongs to the ThiG family. Homotetramer. Forms heterodimers with either ThiH or ThiS.

It localises to the cytoplasm. It carries out the reaction [ThiS sulfur-carrier protein]-C-terminal-Gly-aminoethanethioate + 2-iminoacetate + 1-deoxy-D-xylulose 5-phosphate = [ThiS sulfur-carrier protein]-C-terminal Gly-Gly + 2-[(2R,5Z)-2-carboxy-4-methylthiazol-5(2H)-ylidene]ethyl phosphate + 2 H2O + H(+). The protein operates within cofactor biosynthesis; thiamine diphosphate biosynthesis. In terms of biological role, catalyzes the rearrangement of 1-deoxy-D-xylulose 5-phosphate (DXP) to produce the thiazole phosphate moiety of thiamine. Sulfur is provided by the thiocarboxylate moiety of the carrier protein ThiS. In vitro, sulfur can be provided by H(2)S. The sequence is that of Thiazole synthase from Erwinia pyrifoliae (strain DSM 12162 / Ep1/96).